The following is a 464-amino-acid chain: ATP synthase subunit beta (464 aa).

153–160 (GGAGVGKT) lines the ATP pocket.

Belongs to the ATPase alpha/beta chains family. In terms of assembly, F-type ATPases have 2 components, CF(1) - the catalytic core - and CF(0) - the membrane proton channel. CF(1) has five subunits: alpha(3), beta(3), gamma(1), delta(1), epsilon(1). CF(0) has three main subunits: a(1), b(2) and c(9-12). The alpha and beta chains form an alternating ring which encloses part of the gamma chain. CF(1) is attached to CF(0) by a central stalk formed by the gamma and epsilon chains, while a peripheral stalk is formed by the delta and b chains.

The protein resides in the cell inner membrane. It carries out the reaction ATP + H2O + 4 H(+)(in) = ADP + phosphate + 5 H(+)(out). Produces ATP from ADP in the presence of a proton gradient across the membrane. The catalytic sites are hosted primarily by the beta subunits. In Burkholderia ambifaria (strain MC40-6), this protein is ATP synthase subunit beta.